Consider the following 36-residue polypeptide: Protein YmgL (36 aa).

This is Protein YmgL from Escherichia coli (strain K12).